A 315-amino-acid polypeptide reads, in one-letter code: Ester hydrolase C11orf54 homolog (315 aa).

Histidine 266, histidine 268, and histidine 278 together coordinate Zn(2+).

In terms of assembly, monomer.

It is found in the nucleus. Its function is as follows. Exhibits ester hydrolase activity on the substrate p-nitrophenyl acetate. This chain is Ester hydrolase C11orf54 homolog, found in Bos taurus (Bovine).